The chain runs to 470 residues: GTPase Der (470 aa).

2 consecutive EngA-type G domains span residues 32–195 and 206–379; these read PVVA…PTIS and RRVA…KSWD. Residues 38 to 45, 85 to 89, 147 to 150, 212 to 219, 259 to 263, and 324 to 327 contribute to the GTP site; these read GRPNVGKS, DTGGW, NKVD, GKPNVGKS, DTAGL, and NKWD. The 83-residue stretch at 380 to 462 folds into the KH-like domain; the sequence is TRVSTGRLNT…PIRINVRVRE (83 aa).

It belongs to the TRAFAC class TrmE-Era-EngA-EngB-Septin-like GTPase superfamily. EngA (Der) GTPase family. Associates with the 50S ribosomal subunit.

GTPase that plays an essential role in the late steps of ribosome biogenesis. This chain is GTPase Der, found in Mycolicibacterium vanbaalenii (strain DSM 7251 / JCM 13017 / BCRC 16820 / KCTC 9966 / NRRL B-24157 / PYR-1) (Mycobacterium vanbaalenii).